The sequence spans 416 residues: Protein PBN1 (416 aa).

The Lumenal portion of the chain corresponds to 1 to 385 (MVTRHRVTVL…PDTKDYSKIK (385 aa)). N-linked (GlcNAc...) asparagine glycans are attached at residues asparagine 24, asparagine 85, asparagine 120, asparagine 212, and asparagine 365. The helical; Signal-anchor for type III membrane protein transmembrane segment at 386-405 (NGTLLCLLISIIYIFSKVFG) threads the bilayer. The Cytoplasmic segment spans residues 406–416 (NNKKKRSVKRE).

The protein belongs to the PIGX family. In terms of processing, N-glycosylated.

Its subcellular location is the endoplasmic reticulum membrane. It functions in the pathway glycolipid biosynthesis; glycosylphosphatidylinositol-anchor biosynthesis. Its function is as follows. Required for proper folding and/or the stability of a subset of proteins in the endoplasmic reticulum. Aids the autocatalytic processing of PRB1. Component of glycosylphosphatidylinositol-mannosyltransferase 1 which transfers the first of the 4 mannoses in the GPI-anchor precursors during GPI-anchor biosynthesis. Probably acts by stabilizing the mannosyltransferase GPI14. This chain is Protein PBN1 (PBN1), found in Saccharomyces cerevisiae (strain ATCC 204508 / S288c) (Baker's yeast).